Consider the following 90-residue polypeptide: Small ribosomal subunit protein uS15 (90 aa).

The protein belongs to the universal ribosomal protein uS15 family. Part of the 30S ribosomal subunit. Forms a bridge to the 50S subunit in the 70S ribosome, contacting the 23S rRNA.

One of the primary rRNA binding proteins, it binds directly to 16S rRNA where it helps nucleate assembly of the platform of the 30S subunit by binding and bridging several RNA helices of the 16S rRNA. Functionally, forms an intersubunit bridge (bridge B4) with the 23S rRNA of the 50S subunit in the ribosome. In Wolbachia pipientis wMel, this protein is Small ribosomal subunit protein uS15.